The primary structure comprises 353 residues: Envelope glycoprotein M (353 aa).

Over 1–27 (MAKAGVMTLSHVDRMNLRTWTMAIACC) the chain is Intravirion. The helical transmembrane segment at 28–48 (LLSFVNIVVFSVAAHFPGIGF) threads the bilayer. At 49–82 (PCYYPRIIDFDNMNLTMYNAIHHLTPQLFLDPVQ) the chain is on the virion surface side. A helical transmembrane segment spans residues 83-103 (LIVYVIFTELIFFCVLSYYIV). The Intravirion segment spans residues 104-132 (CWVQIYFRSEHGTQVNQSTRDINFMGDSA). A helical transmembrane segment spans residues 133 to 153 (TCFTFVLTMDTFQIFLLSLSF). The Virion surface segment spans residues 154-157 (RLPS). The chain crosses the membrane as a helical span at residues 158 to 178 (MVAFSKCMYFMCLTAFVVTLV). Residues 179-210 (THYESRERSAFALSKIHPKLQGTIRYRTAVVN) are Intravirion-facing. A helical membrane pass occupies residues 211–231 (LTQLILGFATMVLAMSLALGF). At 232-240 (GNSFFVKTA) the chain is on the virion surface side. A helical membrane pass occupies residues 241–261 (HVVFGAMVAFAIVACVYFSII). The Intravirion segment spans residues 262–270 (ESVLSRYMK). The helical transmembrane segment at 271–291 (VQFGYHIGTILGVCGAMYPII) threads the bilayer. The Virion surface segment spans residues 292 to 304 (RYEALNASSYARD). A helical transmembrane segment spans residues 305-325 (INIGITVLLLLCVAFSVIRTV). Over 326-353 (RFLLRRNKRYRALALDNEEIRALRSDAE) the chain is Intravirion.

Belongs to the herpesviridae glycoprotein M family. In terms of assembly, interacts (via N-terminus) with gN (via N-terminus). The gM-gN heterodimer forms the gCII complex.

The protein localises to the virion membrane. The protein resides in the host Golgi apparatus. It localises to the host trans-Golgi network. It is found in the host endosome membrane. Its subcellular location is the host nucleus inner membrane. Its function is as follows. Envelope glycoprotein important for virion assembly and egress. Plays a role in the correct incorporation of gH-gL into virion membrane. Directs the glycoprotein N (gN) to the host trans-Golgi network. The chain is Envelope glycoprotein M from Mus musculus (Mouse).